The chain runs to 185 residues: Ribosome-recycling factor (185 aa).

This sequence belongs to the RRF family.

The protein localises to the cytoplasm. Responsible for the release of ribosomes from messenger RNA at the termination of protein biosynthesis. May increase the efficiency of translation by recycling ribosomes from one round of translation to another. The sequence is that of Ribosome-recycling factor from Wolbachia pipientis subsp. Culex pipiens (strain wPip).